Consider the following 289-residue polypeptide: 2-dehydro-3-deoxyphosphooctonate aldolase (289 aa).

The protein belongs to the KdsA family.

Its subcellular location is the cytoplasm. The enzyme catalyses D-arabinose 5-phosphate + phosphoenolpyruvate + H2O = 3-deoxy-alpha-D-manno-2-octulosonate-8-phosphate + phosphate. It functions in the pathway carbohydrate biosynthesis; 3-deoxy-D-manno-octulosonate biosynthesis; 3-deoxy-D-manno-octulosonate from D-ribulose 5-phosphate: step 2/3. Its pathway is bacterial outer membrane biogenesis; lipopolysaccharide biosynthesis. This chain is 2-dehydro-3-deoxyphosphooctonate aldolase, found in Cupriavidus taiwanensis (strain DSM 17343 / BCRC 17206 / CCUG 44338 / CIP 107171 / LMG 19424 / R1) (Ralstonia taiwanensis (strain LMG 19424)).